Consider the following 375-residue polypeptide: Histidine biosynthesis bifunctional protein HisB (375 aa).

The segment at 1–168 (MTPIVFIDRD…GIAHTLADAP (168 aa)) is histidinol-phosphatase. Asp-8 serves as the catalytic Nucleophile. Mg(2+) is bound by residues Asp-8, Asp-10, and Asp-128. Residue Asp-10 is the Proton donor of the active site. The tract at residues 169–375 (RRAVVQRHTK…HVLPSTKGAL (207 aa)) is imidazoleglycerol-phosphate dehydratase.

It in the N-terminal section; belongs to the histidinol-phosphatase family. This sequence in the C-terminal section; belongs to the imidazoleglycerol-phosphate dehydratase family. The cofactor is Mg(2+).

The protein resides in the cytoplasm. The enzyme catalyses D-erythro-1-(imidazol-4-yl)glycerol 3-phosphate = 3-(imidazol-4-yl)-2-oxopropyl phosphate + H2O. It carries out the reaction L-histidinol phosphate + H2O = L-histidinol + phosphate. It functions in the pathway amino-acid biosynthesis; L-histidine biosynthesis; L-histidine from 5-phospho-alpha-D-ribose 1-diphosphate: step 6/9. It participates in amino-acid biosynthesis; L-histidine biosynthesis; L-histidine from 5-phospho-alpha-D-ribose 1-diphosphate: step 8/9. The polypeptide is Histidine biosynthesis bifunctional protein HisB (Xylella fastidiosa (strain 9a5c)).